The sequence spans 124 residues: MNKVKCYVLFTALLSSLYAHGAPQTITELCSEYRNTQIYTINDKILSYTESMAGKREMVIITFKSGETFQVEVPGSQHIDSQKKAIERMKDTLRITYLTETKIDKLCVWNNKTPNSIAAISMKN.

A signal peptide spans 1-21 (MNKVKCYVLFTALLSSLYAHG). A disulfide bond links cysteine 30 and cysteine 107.

Heterohexamer of one A chain and of five B chains.

Its function is as follows. The biological activity of the toxin is produced by the A chain, which activates intracellular adenyl cyclase. This chain is Heat-labile enterotoxin B chain (eltB), found in Escherichia coli.